Consider the following 277-residue polypeptide: Odontogenic ameloblast-associated protein (277 aa).

Residues 1–15 form the signal peptide; that stretch reads MRTLILLGILGATMS. Residues 103 to 124 are disordered; the sequence is TQAGQLDPSQPQTPQQTQRGPK. Thr115 is a glycosylation site (O-linked (GalNAc...) threonine). Positions 127-129 are interaction with ARHGEF5; sequence MPS. Residues Thr208, Thr248, and Thr271 are each glycosylated (O-linked (GalNAc...) threonine).

It belongs to the ODAM family. As to quaternary structure, interacts (via C-terminus) with ARHGEF5. Post-translationally, O-glycosylated.

It localises to the secreted. The protein localises to the cytoplasm. Its subcellular location is the nucleus. Functionally, tooth-associated epithelia protein that probably plays a role in odontogenesis, the complex process that results in the initiation and generation of the tooth. May be incorporated in the enamel matrix at the end of mineralization process. Involved in the induction of RHOA activity via interaction with ARHGEF and expression of downstream factors such as ROCK. Plays a role in attachment of the junctional epithelium to the tooth surface. In Bos taurus (Bovine), this protein is Odontogenic ameloblast-associated protein (ODAM).